Reading from the N-terminus, the 352-residue chain is Lipoyl synthase (352 aa).

The segment at 1–21 is disordered; sequence MTSVDTPTPHGGTPAPAPATA. Residues Cys-71, Cys-76, Cys-82, Cys-97, Cys-101, Cys-104, and Ser-308 each contribute to the [4Fe-4S] cluster site. Positions 83-297 constitute a Radical SAM core domain; the sequence is WEDREATFLI…SRVAEEIGFA (215 aa).

This sequence belongs to the radical SAM superfamily. Lipoyl synthase family. [4Fe-4S] cluster serves as cofactor.

Its subcellular location is the cytoplasm. The catalysed reaction is [[Fe-S] cluster scaffold protein carrying a second [4Fe-4S](2+) cluster] + N(6)-octanoyl-L-lysyl-[protein] + 2 oxidized [2Fe-2S]-[ferredoxin] + 2 S-adenosyl-L-methionine + 4 H(+) = [[Fe-S] cluster scaffold protein] + N(6)-[(R)-dihydrolipoyl]-L-lysyl-[protein] + 4 Fe(3+) + 2 hydrogen sulfide + 2 5'-deoxyadenosine + 2 L-methionine + 2 reduced [2Fe-2S]-[ferredoxin]. The protein operates within protein modification; protein lipoylation via endogenous pathway; protein N(6)-(lipoyl)lysine from octanoyl-[acyl-carrier-protein]: step 2/2. Its function is as follows. Catalyzes the radical-mediated insertion of two sulfur atoms into the C-6 and C-8 positions of the octanoyl moiety bound to the lipoyl domains of lipoate-dependent enzymes, thereby converting the octanoylated domains into lipoylated derivatives. The protein is Lipoyl synthase of Nocardia farcinica (strain IFM 10152).